A 548-amino-acid chain; its full sequence is Membrane protein insertase YidC (548 aa).

A helical transmembrane segment spans residues 6–26; that stretch reads NLLVIALLFVSFMIWQAWEQD. The disordered stretch occupies residues 28 to 54; the sequence is NPQPQTQQTTQTTTTAAGSAADQGVPA. Residues 29-42 show a composition bias toward low complexity; the sequence is PQPQTQQTTQTTTT. 4 helical membrane passes run 350–370, 424–444, 458–478, and 499–519; these read FLGN…GIMY, FPLI…MGSI, LSAQ…MFFI, and PVIF…YYIV.

This sequence belongs to the OXA1/ALB3/YidC family. Type 1 subfamily. In terms of assembly, interacts with the Sec translocase complex via SecD. Specifically interacts with transmembrane segments of nascent integral membrane proteins during membrane integration.

The protein localises to the cell inner membrane. Required for the insertion and/or proper folding and/or complex formation of integral membrane proteins into the membrane. Involved in integration of membrane proteins that insert both dependently and independently of the Sec translocase complex, as well as at least some lipoproteins. Aids folding of multispanning membrane proteins. The sequence is that of Membrane protein insertase YidC from Citrobacter koseri (strain ATCC BAA-895 / CDC 4225-83 / SGSC4696).